Here is a 592-residue protein sequence, read N- to C-terminus: Glutathione-regulated potassium-efflux system protein KefB (592 aa).

The next 13 membrane-spanning stretches (helical) occupy residues 4–24, 29–49, 55–75, 87–107, 115–135, 152–172, 177–197, 207–227, 230–250, 268–288, 291–311, 324–344, and 356–376; these read SDFL…VPLA, IGAV…GLGF, EILH…GLEL, IFGV…GLLM, AAVV…LQLM, VLLF…LLAG, HFDW…LIGG, FIAA…LVLG, LFMD…GVLL, GLLL…GVLY, LLWV…VLYL, MQFA…FSTA, and ALLL…MKLV. Residues 400–519 form the RCK N-terminal domain; sequence KPQVIVVGFG…AGVTQFSRET (120 aa).

This sequence belongs to the monovalent cation:proton antiporter 2 (CPA2) transporter (TC 2.A.37) family. KefB subfamily. In terms of assembly, interacts with the regulatory subunit KefG.

The protein resides in the cell inner membrane. Functionally, pore-forming subunit of a potassium efflux system that confers protection against electrophiles. Catalyzes K(+)/H(+) antiport. In Escherichia coli O157:H7, this protein is Glutathione-regulated potassium-efflux system protein KefB.